We begin with the raw amino-acid sequence, 123 residues long: Small ribosomal subunit protein uS12 (123 aa).

D89 is modified (3-methylthioaspartic acid). The disordered stretch occupies residues 100–123; it reads GSLDTSGVKGRNQGRSKYGTKKPK. Basic residues predominate over residues 111 to 123; the sequence is NQGRSKYGTKKPK.

It belongs to the universal ribosomal protein uS12 family. As to quaternary structure, part of the 30S ribosomal subunit. Contacts proteins S8 and S17. May interact with IF1 in the 30S initiation complex.

In terms of biological role, with S4 and S5 plays an important role in translational accuracy. Interacts with and stabilizes bases of the 16S rRNA that are involved in tRNA selection in the A site and with the mRNA backbone. Located at the interface of the 30S and 50S subunits, it traverses the body of the 30S subunit contacting proteins on the other side and probably holding the rRNA structure together. The combined cluster of proteins S8, S12 and S17 appears to hold together the shoulder and platform of the 30S subunit. The chain is Small ribosomal subunit protein uS12 from Pseudomonas syringae pv. syringae (strain B728a).